Here is a 151-residue protein sequence, read N- to C-terminus: Transcriptional regulator MraZ (151 aa).

SpoVT-AbrB domains follow at residues 5–52 (ANAI…PLDE) and 81–124 (AVDL…DEDA).

The protein belongs to the MraZ family. As to quaternary structure, forms oligomers.

It localises to the cytoplasm. The protein localises to the nucleoid. The sequence is that of Transcriptional regulator MraZ from Pseudomonas fluorescens (strain ATCC BAA-477 / NRRL B-23932 / Pf-5).